The following is an 800-amino-acid chain: DNA topoisomerase 4 subunit A (800 aa).

In terms of domain architecture, Topo IIA-type catalytic spans 31–495; it reads LPDVRDGLKP…EIEEIKIDKE (465 aa). Tyr119 (O-(5'-phospho-DNA)-tyrosine intermediate) is an active-site residue.

Belongs to the type II topoisomerase GyrA/ParC subunit family. ParC type 2 subfamily. As to quaternary structure, heterotetramer composed of ParC and ParE.

Its subcellular location is the cell membrane. The enzyme catalyses ATP-dependent breakage, passage and rejoining of double-stranded DNA.. Topoisomerase IV is essential for chromosome segregation. It relaxes supercoiled DNA. Performs the decatenation events required during the replication of a circular DNA molecule. The sequence is that of DNA topoisomerase 4 subunit A from Staphylococcus aureus (strain MSSA476).